Here is a 409-residue protein sequence, read N- to C-terminus: Microfibrillar-associated protein 3-like (409 aa).

A signal peptide spans 1 to 28 (MGLLKSHLTVCLPPSVPFLILVSTLATA). At 29–148 (KSVTNSTLNG…TLRVIFTSGD (120 aa)) the chain is on the extracellular side. Residues N33, N37, N67, N111, and N135 are each glycosylated (N-linked (GlcNAc...) asparagine). Residues 47-141 (PVIIARTDHI…GTINNTVTLR (95 aa)) enclose the Ig-like C2-type domain. A disulfide bridge connects residues C68 and C125. Residues 149-169 (MGVYYMVVCLVAFTIVMILNI) form a helical membrane-spanning segment. Over 170–409 (TRLCMMSSHL…NTCIIYESHV (240 aa)) the chain is Cytoplasmic. A Phosphotyrosine modification is found at Y287. 4 positions are modified to phosphoserine: S298, S303, S306, and S307. The disordered stretch occupies residues 319-392 (VSVHPQSKKD…LPPAHLETTE (74 aa)). The segment covering 333–348 (QEGENLEVKDEEETEP) has biased composition (acidic residues). The segment covering 362 to 372 (DITTTELTSEE) has biased composition (polar residues).

Its subcellular location is the cell membrane. It is found in the nucleus. It localises to the cytoplasm. In terms of biological role, may participate in the nuclear signaling of EGFR and MAPK1/ERK2. The protein is Microfibrillar-associated protein 3-like (Mfap3l) of Rattus norvegicus (Rat).